The sequence spans 27 residues: Conotoxin Bt9.2 (27 aa).

Cystine bridges form between Cys2-Cys16, Cys6-Cys19, and Cys12-Cys24. Position 13 is a 4-hydroxyproline (Pro13).

As to expression, expressed by the venom duct.

It is found in the secreted. Functionally, probable neurotoxin that inhibits ion channels. This chain is Conotoxin Bt9.2, found in Conus betulinus (Beech cone).